A 246-amino-acid polypeptide reads, in one-letter code: Small ribosomal subunit protein uS2 (246 aa).

Belongs to the universal ribosomal protein uS2 family.

The sequence is that of Small ribosomal subunit protein uS2 from Helicobacter acinonychis (strain Sheeba).